Here is a 143-residue protein sequence, read N- to C-terminus: Large ribosomal subunit protein uL11 (143 aa).

This sequence belongs to the universal ribosomal protein uL11 family. As to quaternary structure, part of the ribosomal stalk of the 50S ribosomal subunit. Interacts with L10 and the large rRNA to form the base of the stalk. L10 forms an elongated spine to which L12 dimers bind in a sequential fashion forming a multimeric L10(L12)X complex. In terms of processing, one or more lysine residues are methylated.

Functionally, forms part of the ribosomal stalk which helps the ribosome interact with GTP-bound translation factors. This Methylococcus capsulatus (strain ATCC 33009 / NCIMB 11132 / Bath) protein is Large ribosomal subunit protein uL11.